A 286-amino-acid chain; its full sequence is tRNA (guanine-N(7)-)-methyltransferase (286 aa).

Residues S7 and S59 each carry the phosphoserine modification. S-adenosyl-L-methionine contacts are provided by residues G103, 126–127, 161–162, and C181; these read EI and NA. Residue D184 is part of the active site. Residue 259 to 261 coordinates S-adenosyl-L-methionine; that stretch reads TEE.

It belongs to the class I-like SAM-binding methyltransferase superfamily. TrmB family. As to quaternary structure, forms a complex with TRM82.

The protein localises to the nucleus. It catalyses the reaction guanosine(46) in tRNA + S-adenosyl-L-methionine = N(7)-methylguanosine(46) in tRNA + S-adenosyl-L-homocysteine. Its pathway is tRNA modification; N(7)-methylguanine-tRNA biosynthesis. Methyltransferase that catalyzes the formation of N(7)-methylguanine at position 46 (m7G46) in tRNA, a modification required to maintain stability of tRNAs; its absence resulting in tRNA decay. Both the D-stem and T-stem structures of tRNAs are required for efficient methyltransferase activity. This is tRNA (guanine-N(7)-)-methyltransferase from Saccharomyces cerevisiae (strain YJM789) (Baker's yeast).